A 387-amino-acid polypeptide reads, in one-letter code: Galactokinase (387 aa).

Substrate is bound at residue 33–36 (EHID). Residues serine 67 and 124–130 (GAGLSSS) contribute to the ATP site. Positions 130 and 162 each coordinate Mg(2+). Aspartate 174 serves as the catalytic Proton acceptor. Tyrosine 224 contacts substrate.

The protein belongs to the GHMP kinase family. GalK subfamily.

It localises to the cytoplasm. It carries out the reaction alpha-D-galactose + ATP = alpha-D-galactose 1-phosphate + ADP + H(+). The protein operates within carbohydrate metabolism; galactose metabolism. Functionally, catalyzes the transfer of the gamma-phosphate of ATP to D-galactose to form alpha-D-galactose-1-phosphate (Gal-1-P). This chain is Galactokinase, found in Clostridium perfringens (strain 13 / Type A).